The primary structure comprises 465 residues: SET domain-containing protein 3 (465 aa).

In terms of domain architecture, SET spans Asp18–Gly265.

This sequence belongs to the class V-like SAM-binding methyltransferase superfamily.

The protein is SET domain-containing protein 3 (set-3) of Caenorhabditis elegans.